The following is a 152-amino-acid chain: MFRRPVLQVFRQFVRHESEVASSLVLERSLNRVQLLGRVGQDPVMRQVEGKNPVTIFSLATNEMWRSGDSEVYQMGDVSQKTTWHRISVFRPGLRDVAYQYVKKGARIFVEGKVDYGEYMDKNNVRRQATTIIAGKKLVVHSVSGCSLEGLA.

Residues 1-16 constitute a mitochondrion transit peptide; sequence MFRRPVLQVFRQFVRH. Positions 30-141 constitute an SSB domain; it reads LNRVQLLGRV…IIAGKKLVVH (112 aa). Phosphoserine occurs at positions 67 and 79. Lysine 113 is modified (N6-acetyllysine). At lysine 122 the chain carries N6-succinyllysine.

Homotetramer. Interacts with MPG/AAG, through inhibition of its glycosylase activity it potentially prevents formation of DNA breaks in ssDNA, ensuring that base removal primarily occurs in dsDNA. Interacts with POLDIP2. Interacts with PRIMPOL. In terms of tissue distribution, expressed in all the layers of the retina (at protein level).

The protein resides in the mitochondrion. Its subcellular location is the mitochondrion matrix. It localises to the mitochondrion nucleoid. Functionally, binds preferentially and cooperatively to pyrimidine rich single-stranded DNA (ss-DNA). In vitro, required to maintain the copy number of mitochondrial DNA (mtDNA) and plays a crucial role during mtDNA replication by stimulating the activity of the replisome components POLG and TWNK at the replication fork. Promotes the activity of the gamma complex polymerase POLG, largely by organizing the template DNA and eliminating secondary structures to favor ss-DNA conformations that facilitate POLG activity. In addition it is able to promote the 5'-3' unwinding activity of the mtDNA helicase TWNK. May also function in mtDNA repair. This Mus musculus (Mouse) protein is Single-stranded DNA-binding protein, mitochondrial (Ssbp1).